The following is a 96-amino-acid chain: Molybdopterin synthase sulfur carrier subunit (96 aa).

G96 carries the post-translational modification 1-thioglycine; alternate. The residue at position 96 (G96) is a Glycyl adenylate; alternate.

This sequence belongs to the MoaD family. MOCS2A subfamily. Heterotetramer; composed of 2 small (MOCS2A) and 2 large (MOCS2B) subunits. C-terminal thiocarboxylation occurs in 2 steps, it is first acyl-adenylated (-COAMP) via the hesA/moeB/thiF part of UBA4, then thiocarboxylated (-COSH) via the rhodanese domain of UBA4.

It is found in the cytoplasm. Its pathway is cofactor biosynthesis; molybdopterin biosynthesis. Functionally, acts as a sulfur carrier required for molybdopterin biosynthesis. Component of the molybdopterin synthase complex that catalyzes the conversion of precursor Z into molybdopterin by mediating the incorporation of 2 sulfur atoms into precursor Z to generate a dithiolene group. In the complex, serves as sulfur donor by being thiocarboxylated (-COSH) at its C-terminus by UBA4. After interaction with MOCS2B, the sulfur is then transferred to precursor Z to form molybdopterin. The protein is Molybdopterin synthase sulfur carrier subunit of Phaeosphaeria nodorum (strain SN15 / ATCC MYA-4574 / FGSC 10173) (Glume blotch fungus).